The primary structure comprises 179 residues: ATP-dependent protease subunit HslV (179 aa).

Thr-7 is a catalytic residue. Positions 162, 165, and 168 each coordinate Na(+).

Belongs to the peptidase T1B family. HslV subfamily. A double ring-shaped homohexamer of HslV is capped on each side by a ring-shaped HslU homohexamer. The assembly of the HslU/HslV complex is dependent on binding of ATP.

It is found in the cytoplasm. The catalysed reaction is ATP-dependent cleavage of peptide bonds with broad specificity.. With respect to regulation, allosterically activated by HslU binding. Protease subunit of a proteasome-like degradation complex believed to be a general protein degrading machinery. The polypeptide is ATP-dependent protease subunit HslV (Bordetella pertussis (strain Tohama I / ATCC BAA-589 / NCTC 13251)).